Reading from the N-terminus, the 327-residue chain is Malate dehydrogenase (327 aa).

11 to 17 (GAAGQIG) contributes to the NAD(+) binding site. Residues Arg92 and Arg98 each contribute to the substrate site. NAD(+) contacts are provided by residues Asn105, Gln112, and 129–131 (VGN). The substrate site is built by Asn131 and Arg162. His187 serves as the catalytic Proton acceptor.

Belongs to the LDH/MDH superfamily. MDH type 2 family.

It catalyses the reaction (S)-malate + NAD(+) = oxaloacetate + NADH + H(+). Its function is as follows. Catalyzes the reversible oxidation of malate to oxaloacetate. In Leptospira biflexa serovar Patoc (strain Patoc 1 / Ames), this protein is Malate dehydrogenase.